Consider the following 268-residue polypeptide: Probable membrane transporter protein HI_0806 (268 aa).

A run of 8 helical transmembrane segments spans residues 6 to 26 (IFILLICGICTNMVSAIFGIG), 46 to 66 (VISATSLTIVMCTALINLLFF), 79 to 99 (ILWSIAMVIGVQIGFELSFYF), 101 to 121 (TAIISLIFTVSLSALAIKTFL), 147 to 167 (GGGLIAGITGIGGGSILAPLV), 178 to 198 (IAVYTNYMMIIGGIGNLYGYL), 212 to 232 (LGLNFLVVGVVTLGSFEMSFF), and 248 to 268 (LLAIILFCIAAYMCILEFVFH).

This sequence belongs to the 4-toluene sulfonate uptake permease (TSUP) (TC 2.A.102) family.

It localises to the cell membrane. The protein is Probable membrane transporter protein HI_0806 of Haemophilus influenzae (strain ATCC 51907 / DSM 11121 / KW20 / Rd).